We begin with the raw amino-acid sequence, 309 residues long: Aurora kinase C (309 aa).

The tract at residues 1-33 (MSSPRAVVQLGKAQPAGEELATANQTAQQPSSP) is disordered. A compositionally biased stretch (polar residues) spans 22–32 (TANQTAQQPSS). A Protein kinase domain is found at 43–293 (FEIGRPLGKG…LAQILKHPWV (251 aa)). ATP-binding positions include 49-57 (LGKGKFGNV) and Lys72. Residue Asp166 is the Proton acceptor of the active site. A Phosphothreonine; by PKA modification is found at Thr198. Positions 292–309 (WVQAHSRRVLPPCAQMAS) are interaction with BIRC5.

Belongs to the protein kinase superfamily. Ser/Thr protein kinase family. Aurora subfamily. As to quaternary structure, component of the chromosomal passenger complex (CPC) composed of at least BIRC5/survivin, CDCA8/borealin, INCENP, AURKB or AURKC; predominantly independent AURKB- and AURKC-containing complexes exist; in the complex interacts directly with BIRC5/survivin and INCENP. Interacts with TACC1. As to expression, isoform 1 and isoform 2 are expressed in testis. Elevated expression levels were seen only in a subset of cancer cell lines such as Hep-G2, Huh-7 and HeLa. Expression is maximum at M phase.

The protein localises to the nucleus. It is found in the chromosome. Its subcellular location is the centromere. It localises to the cytoplasm. The protein resides in the cytoskeleton. The protein localises to the spindle. It carries out the reaction L-seryl-[protein] + ATP = O-phospho-L-seryl-[protein] + ADP + H(+). The catalysed reaction is L-threonyl-[protein] + ATP = O-phospho-L-threonyl-[protein] + ADP + H(+). Okadaic acid, an inhibitor of protein phosphatase 1 (PP1), protein phosphatase 2A (PP2A) and protein phosphatase 5 (PP5), increases AURKC activity. AURKC is also stabilized through its interaction with INCENP, which also acts as an activator. Its function is as follows. Serine/threonine-protein kinase component of the chromosomal passenger complex (CPC), a complex that acts as a key regulator of mitosis. The CPC complex has essential functions at the centromere in ensuring correct chromosome alignment and segregation and is required for chromatin-induced microtubule stabilization and spindle assembly. Also plays a role in meiosis and more particularly in spermatogenesis. Has redundant cellular functions with AURKB and can rescue an AURKB knockdown. Like AURKB, AURKC phosphorylates histone H3 at 'Ser-10' and 'Ser-28'. AURKC phosphorylates the CPC complex subunits BIRC5/survivin and INCENP leading to increased AURKC activity. Phosphorylates TACC1, another protein involved in cell division, at 'Ser-228'. In Homo sapiens (Human), this protein is Aurora kinase C (AURKC).